The following is a 540-amino-acid chain: Putative cysteine ligase BshC (540 aa).

The stretch at 425–453 (IEKVEGMIEQQRRLNKDLLDEVAGNQNNI) forms a coiled coil.

The protein belongs to the BshC family.

Its function is as follows. Involved in bacillithiol (BSH) biosynthesis. May catalyze the last step of the pathway, the addition of cysteine to glucosamine malate (GlcN-Mal) to generate BSH. The sequence is that of Putative cysteine ligase BshC from Staphylococcus aureus (strain NCTC 8325 / PS 47).